The primary structure comprises 1234 residues: DNA-directed RNA polymerase I subunit RPA2 (1234 aa).

The C4-type zinc-finger motif lies at 1119 to 1150; the sequence is CRQCGSFLSTQPTVSPFIGKRKAVSTVRCRNC.

The protein belongs to the RNA polymerase beta chain family. As to quaternary structure, component of the RNA polymerase I (Pol I) complex consisting of 14 subunits.

Its subcellular location is the nucleus. It is found in the nucleolus. The catalysed reaction is RNA(n) + a ribonucleoside 5'-triphosphate = RNA(n+1) + diphosphate. Functionally, DNA-dependent RNA polymerase catalyzes the transcription of DNA into RNA using the four ribonucleoside triphosphates as substrates. Second largest core component of RNA polymerase I which synthesizes ribosomal RNA precursors. Proposed to contribute to the polymerase catalytic activity and forms the polymerase active center together with the largest subunit. Pol I is composed of mobile elements and RPA2 is part of the core element with the central large cleft and probably a clamp element that moves to open and close the cleft. This chain is DNA-directed RNA polymerase I subunit RPA2 (acr-2), found in Neurospora crassa (strain ATCC 24698 / 74-OR23-1A / CBS 708.71 / DSM 1257 / FGSC 987).